A 165-amino-acid polypeptide reads, in one-letter code: Cyclic pyranopterin monophosphate synthase (165 aa).

Residues 79–81 (LCH) and 117–118 (ME) each bind substrate. The active site involves aspartate 132.

It belongs to the MoaC family. As to quaternary structure, homohexamer; trimer of dimers.

The catalysed reaction is (8S)-3',8-cyclo-7,8-dihydroguanosine 5'-triphosphate = cyclic pyranopterin phosphate + diphosphate. The protein operates within cofactor biosynthesis; molybdopterin biosynthesis. In terms of biological role, catalyzes the conversion of (8S)-3',8-cyclo-7,8-dihydroguanosine 5'-triphosphate to cyclic pyranopterin monophosphate (cPMP). This chain is Cyclic pyranopterin monophosphate synthase, found in Chloroflexus aggregans (strain MD-66 / DSM 9485).